A 130-amino-acid polypeptide reads, in one-letter code: Sec-independent protein translocase protein TatB (130 aa).

Residues 2–22 traverse the membrane as a helical segment; sequence FANIGWGEMLVLVVVGLVVLG. The disordered stretch occupies residues 108–130; that stretch reads DAVASAQEAPDEPVRPPFDSDAT.

The protein belongs to the TatB family. As to quaternary structure, the Tat system comprises two distinct complexes: a TatABC complex, containing multiple copies of TatA, TatB and TatC subunits, and a separate TatA complex, containing only TatA subunits. Substrates initially bind to the TatABC complex, which probably triggers association of the separate TatA complex to form the active translocon.

The protein localises to the cell membrane. In terms of biological role, part of the twin-arginine translocation (Tat) system that transports large folded proteins containing a characteristic twin-arginine motif in their signal peptide across membranes. Together with TatC, TatB is part of a receptor directly interacting with Tat signal peptides. TatB may form an oligomeric binding site that transiently accommodates folded Tat precursor proteins before their translocation. In Mycobacterium ulcerans (strain Agy99), this protein is Sec-independent protein translocase protein TatB.